Reading from the N-terminus, the 341-residue chain is Phenylalanine--tRNA ligase alpha subunit (341 aa).

Position 254 (E254) interacts with Mg(2+).

The protein belongs to the class-II aminoacyl-tRNA synthetase family. Phe-tRNA synthetase alpha subunit type 1 subfamily. In terms of assembly, tetramer of two alpha and two beta subunits. Mg(2+) is required as a cofactor.

Its subcellular location is the cytoplasm. It carries out the reaction tRNA(Phe) + L-phenylalanine + ATP = L-phenylalanyl-tRNA(Phe) + AMP + diphosphate + H(+). The chain is Phenylalanine--tRNA ligase alpha subunit (pheS) from Mycoplasma pneumoniae (strain ATCC 29342 / M129 / Subtype 1) (Mycoplasmoides pneumoniae).